The chain runs to 286 residues: Pantothenate synthetase (286 aa).

M30–H37 is an ATP binding site. H37 serves as the catalytic Proton donor. Q61 contacts (R)-pantoate. Residue Q61 coordinates beta-alanine. Position 149–152 (G149–D152) interacts with ATP. Q155 is a (R)-pantoate binding site. Residues V178 and L186–R189 each bind ATP.

Belongs to the pantothenate synthetase family. As to quaternary structure, homodimer.

The protein resides in the cytoplasm. The catalysed reaction is (R)-pantoate + beta-alanine + ATP = (R)-pantothenate + AMP + diphosphate + H(+). Its pathway is cofactor biosynthesis; (R)-pantothenate biosynthesis; (R)-pantothenate from (R)-pantoate and beta-alanine: step 1/1. In terms of biological role, catalyzes the condensation of pantoate with beta-alanine in an ATP-dependent reaction via a pantoyl-adenylate intermediate. The protein is Pantothenate synthetase of Stutzerimonas stutzeri (strain A1501) (Pseudomonas stutzeri).